Reading from the N-terminus, the 300-residue chain is Epimerase family protein SACOL0834 (300 aa).

It belongs to the NAD(P)-dependent epimerase/dehydratase family. SDR39U1 subfamily.

In Staphylococcus aureus (strain COL), this protein is Epimerase family protein SACOL0834.